The chain runs to 139 residues: Putative nickel-responsive regulator (139 aa).

Ni(2+) is bound by residues H79, H90, H92, and C98.

The protein belongs to the transcriptional regulatory CopG/NikR family. Requires Ni(2+) as cofactor.

Functionally, transcriptional regulator. The polypeptide is Putative nickel-responsive regulator (Nitratidesulfovibrio vulgaris (strain ATCC 29579 / DSM 644 / CCUG 34227 / NCIMB 8303 / VKM B-1760 / Hildenborough) (Desulfovibrio vulgaris)).